Consider the following 160-residue polypeptide: Calcium-binding protein CP1 (160 aa).

EF-hand domains lie at 22–49 (AFEI…IPSG), 52–87 (NDET…TPFS), and 93–128 (GDDG…AGLA). Ca(2+) is bound by residues Asp27, Asp29, Asp31, Lys33, Asp38, Asp65, Asn67, Asp69, Glu76, Asp106, Asp108, Asp110, Arg112, and Asp117.

Expressed in roots and flowers.

Its subcellular location is the cytoplasm. The protein resides in the cytosol. In terms of biological role, binds calcium in vitro. This chain is Calcium-binding protein CP1, found in Arabidopsis thaliana (Mouse-ear cress).